The primary structure comprises 475 residues: ATP synthase subunit beta 1 (475 aa).

153–160 (GGAGVGKT) contributes to the ATP binding site.

This sequence belongs to the ATPase alpha/beta chains family. In terms of assembly, F-type ATPases have 2 components, CF(1) - the catalytic core - and CF(0) - the membrane proton channel. CF(1) has five subunits: alpha(3), beta(3), gamma(1), delta(1), epsilon(1). CF(0) has three main subunits: a(1), b(2) and c(9-12). The alpha and beta chains form an alternating ring which encloses part of the gamma chain. CF(1) is attached to CF(0) by a central stalk formed by the gamma and epsilon chains, while a peripheral stalk is formed by the delta and b chains.

It localises to the cell membrane. It catalyses the reaction ATP + H2O + 4 H(+)(in) = ADP + phosphate + 5 H(+)(out). In terms of biological role, produces ATP from ADP in the presence of a proton gradient across the membrane. The catalytic sites are hosted primarily by the beta subunits. This is ATP synthase subunit beta 1 from Mycoplasmopsis pulmonis (strain UAB CTIP) (Mycoplasma pulmonis).